The following is a 198-amino-acid chain: Recombination protein RecR (198 aa).

Residues 57–72 form a C4-type zinc finger; that stretch reads CSVCGHITEEDPCYIC. The region spanning 80-175 is the Toprim domain; that stretch reads SVICVVEDDK…KVTRLAQGLS (96 aa).

It belongs to the RecR family.

Functionally, may play a role in DNA repair. It seems to be involved in an RecBC-independent recombinational process of DNA repair. It may act with RecF and RecO. The sequence is that of Recombination protein RecR from Staphylococcus carnosus (strain TM300).